A 137-amino-acid polypeptide reads, in one-letter code: Large ribosomal subunit protein uL16 (137 aa).

This sequence belongs to the universal ribosomal protein uL16 family. In terms of assembly, part of the 50S ribosomal subunit.

In terms of biological role, binds 23S rRNA and is also seen to make contacts with the A and possibly P site tRNAs. This Xanthomonas campestris pv. campestris (strain 8004) protein is Large ribosomal subunit protein uL16.